The primary structure comprises 1960 residues: Zinc finger protein 638 (1960 aa).

The disordered stretch occupies residues 1-137 (MSRPRFNPRG…SPKVQSRYTK (137 aa)). Positions 19–31 (APNPPGMRPPGPF) are enriched in pro residues. Residues R47, R49, and R54 each carry the asymmetric dimethylarginine modification. Over residues 60-75 (SYQNMGPQRMNVQVTQ) the composition is skewed to polar residues. Basic and acidic residues predominate over residues 76–89 (HRTDPRLTKEKLDF). A compositionally biased stretch (polar residues) spans 117–137 (KQSSVTQVTEQSPKVQSRYTK). Residues S128 and S288 each carry the phosphoserine modification. K291 is covalently cross-linked (Glycyl lysine isopeptide (Lys-Gly) (interchain with G-Cter in SUMO2)). 4 positions are modified to phosphoserine: S298, S367, S381, and S418. The segment at 352–373 (KSVISSADAHGGPTESKKDYQS) is disordered. Disordered stretches follow at residues 463-673 (NPEI…QSLS), 749-804 (PGKK…STVK), and 827-899 (KASI…KESE). Over residues 468 to 483 (PSRRNESNRKENETPR) the composition is skewed to basic and acidic residues. An involved in localization to nuclear speckles region spans residues 470-573 (RRNESNRKEN…ERTSRKSVRS (104 aa)). Basic residues predominate over residues 484–556 (RRSHSPSPRH…SRNLLRRSPK (73 aa)). Phosphoserine is present on S554. Basic and acidic residues-rich tracts occupy residues 565–583 (RTSR…EDGG) and 591–602 (EVTKQKHTETVD). 2 positions are modified to phosphoserine: S606 and S615. A compositionally biased stretch (low complexity) spans 618 to 628 (KPSAKSLSSVK). S637 is subject to Phosphoserine. The 76-residue stretch at 676–751 (SILLVSELPE…KSVKVCVPGK (76 aa)) folds into the RRM 1 domain. Residues 755–782 (QNKEMKKKPSDIKKSSASALKKETDASK) are compositionally biased toward basic and acidic residues. A Glycyl lysine isopeptide (Lys-Gly) (interchain with G-Cter in SUMO2) cross-link involves residue K775. A compositionally biased stretch (low complexity) spans 783–802 (TMETVSSSSSAKSGQIKSST). Basic and acidic residues-rich tracts occupy residues 838–854 (KSLE…KDSN), 867–879 (ASSE…KSAE), and 888–899 (ATEKEPVNKESE). Residues 902–976 (SVVFISNLPN…NQLSISMAPE (75 aa)) enclose the RRM 2 domain. Residues 1082-1092 (SEVQRKNDLEL) are compositionally biased toward basic and acidic residues. Disordered regions lie at residues 1082 to 1151 (SEVQ…EEPK), 1396 to 1420 (TVVS…PKPV), 1442 to 1462 (TRSG…GVNR), 1484 to 1527 (TKQS…KSKE), and 1550 to 1583 (PSQA…KGKT). Position 1099 is a phosphoserine (S1099). Over residues 1140–1151 (VHQEELGKEEPK) the composition is skewed to basic and acidic residues. Residues 1399-1409 (SSPKAKSTPSK) show a composition bias toward low complexity. Position 1400 is a phosphoserine (S1400). The span at 1442–1459 (TRSGLAESNSKSKPTQIG) shows a compositional bias: polar residues. 2 stretches are compositionally biased toward basic and acidic residues: residues 1484 to 1503 (TKQS…DDSN) and 1518 to 1527 (TTDRSSKSKE). Residues S1635 and S1661 each carry the phosphoserine modification. Disordered stretches follow at residues 1763–1898 (EVGD…SDVP) and 1930–1960 (KSTR…RSSR). A compositionally biased stretch (basic and acidic residues) spans 1772–1790 (NDSKVELARGKIEHHTDKK). K1804 participates in a covalent cross-link: Glycyl lysine isopeptide (Lys-Gly) (interchain with G-Cter in SUMO2). The segment covering 1806–1818 (DSFSQVGPGSETV) has biased composition (polar residues). Positions 1819–1831 (TQKDLKTMPERHL) are enriched in basic and acidic residues. Phosphoserine is present on S1864. The span at 1870–1885 (AELKDSEPDEKRRKTQ) shows a compositional bias: basic and acidic residues. The Matrin-type zinc-finger motif lies at 1876 to 1906 (EPDEKRRKTQDSSVGKSMTSDVPGDLDFLVP). A compositionally biased stretch (polar residues) spans 1886–1895 (DSSVGKSMTS). Residues 1936–1960 (QNTEKFMAKQRKEKEQNETEERSSR) show a composition bias toward basic and acidic residues.

As to quaternary structure, interacts with FHL2. Interacts with CEBPA, CEBPD and CEBPG. Interacts with MPHOSPH8 and TASOR components of the HUSH complex; leading to recruitment of the HUSH complex. Interacts with SETDB1. Interacts with HDAC1. Interacts with HDAC4.

The protein localises to the nucleus speckle. In terms of biological role, transcription factor that binds to cytidine clusters in double-stranded DNA. Plays a key role in the silencing of unintegrated retroviral DNA: some part of the retroviral DNA formed immediately after infection remains unintegrated in the host genome and is transcriptionally repressed. Mediates transcriptional repression of unintegrated viral DNA by specifically binding to the cytidine clusters of retroviral DNA and mediating the recruitment of chromatin silencers, such as the HUSH complex, SETDB1 and the histone deacetylases HDAC1 and HDAC4. Acts as an early regulator of adipogenesis by acting as a transcription cofactor of CEBPs (CEBPA, CEBPD and/or CEBPG), controlling the expression of PPARG and probably of other proadipogenic genes, such as SREBF1. May also regulate alternative splicing of target genes during adipogenesis. This is Zinc finger protein 638 from Mus musculus (Mouse).